A 518-amino-acid chain; its full sequence is U3 small nucleolar RNA-associated protein 15 homolog (518 aa).

The residue at position 2 (alanine 2) is an N-acetylalanine. WD repeat units follow at residues 36–75, 78–117, 120–159, 162–202, 204–242, 246–285, and 287–326; these read KEFG…PIKT, RFKD…PLRQ, GHTK…EILT, EHSD…SVLS, EHGQ…QLLV, NHHK…VVHS, and DYAA…KKES. Residue lysine 249 forms a Glycyl lysine isopeptide (Lys-Gly) (interchain with G-Cter in SUMO2) linkage.

Part of the small subunit (SSU) processome, composed of more than 70 proteins and the RNA chaperone small nucleolar RNA (snoRNA) U3. May be a component of the proposed t-UTP subcomplex of the ribosomal small subunit (SSU) processome containing at least UTP4, WDR43, HEATR1, UTP15, WDR75. Interacts directly with UTP4 and WDR43.

The protein resides in the nucleus. The protein localises to the nucleolus. Ribosome biogenesis factor. Involved in nucleolar processing of pre-18S ribosomal RNA. Required for optimal pre-ribosomal RNA transcription by RNA polymerase I. Part of the small subunit (SSU) processome, first precursor of the small eukaryotic ribosomal subunit. During the assembly of the SSU processome in the nucleolus, many ribosome biogenesis factors, an RNA chaperone and ribosomal proteins associate with the nascent pre-rRNA and work in concert to generate RNA folding, modifications, rearrangements and cleavage as well as targeted degradation of pre-ribosomal RNA by the RNA exosome. This chain is U3 small nucleolar RNA-associated protein 15 homolog, found in Homo sapiens (Human).